A 239-amino-acid polypeptide reads, in one-letter code: Probable transcriptional regulatory protein BCAH187_A0615 (239 aa).

It belongs to the TACO1 family. YeeN subfamily.

Its subcellular location is the cytoplasm. This chain is Probable transcriptional regulatory protein BCAH187_A0615, found in Bacillus cereus (strain AH187).